Reading from the N-terminus, the 349-residue chain is Galanin receptor type 1 (349 aa).

The Extracellular portion of the chain corresponds to 1–36; the sequence is MELAVGNLSEGNASWPEPPAPEPGPLFGIGVENFVT. Residues N7 and N12 are each glycosylated (N-linked (GlcNAc...) asparagine). Residues 37-57 traverse the membrane as a helical segment; sequence LVVFGLIFALGVLGNSLVITV. The Cytoplasmic segment spans residues 58-70; the sequence is LARSKPGKPRSTT. The helical transmembrane segment at 71-91 threads the bilayer; the sequence is NLFILNLSIADLAYLLFCIPF. Residues 92-109 lie on the Extracellular side of the membrane; that stretch reads QATVYALPTWVLGAFICK. Cysteines 108 and 187 form a disulfide. A helical membrane pass occupies residues 110–131; it reads FIHYFFTVSMLVSIFTLAAMSV. The Cytoplasmic portion of the chain corresponds to 132–151; sequence DRYVAIVHSRRSSSLRVSRN. A helical transmembrane segment spans residues 152-172; it reads ALLGVGCIWALSIAMASPVAY. Residues 173 to 200 lie on the Extracellular side of the membrane; the sequence is HQGLFHPRASNQTFCWEQWPDPRHKKAY. A glycan (N-linked (GlcNAc...) asparagine) is linked at N183. A helical transmembrane segment spans residues 201–221; the sequence is VVCTFVFGYLLPLLLICFCYA. Over 222–248 the chain is Cytoplasmic; the sequence is KVLNHLHKKLKNMSKKSEASKKKTAQT. The chain crosses the membrane as a helical span at residues 249–269; that stretch reads VLVVVVVFGISWLPHHIIHLW. The Extracellular segment spans residues 270 to 271; the sequence is AE. The chain crosses the membrane as a helical span at residues 272-292; the sequence is FGVFPLTPASFLFRITAHCLA. Over 293 to 349 the chain is Cytoplasmic; the sequence is YSNSSVNPIIYAFLSENFRKAYKQVFKCHIRKDSHLSDTKESKSRIDTPPSTNCTHV. C320 carries the S-palmitoyl cysteine lipid modification.

The protein belongs to the G-protein coupled receptor 1 family. As to quaternary structure, interacts with GRP39 AND HTR1A. Palmitoylated on at least one of the three cysteine residues present in the C-terminal part.

The protein resides in the cell membrane. Functionally, receptor for the hormone galanin. The activity of this receptor is mediated by G proteins that inhibit adenylate cyclase activity. This is Galanin receptor type 1 (GALR1) from Homo sapiens (Human).